Consider the following 210-residue polypeptide: Orotate phosphoribosyltransferase (210 aa).

5-phospho-alpha-D-ribose 1-diphosphate is bound at residue Lys26. 34-35 (FF) lines the orotate pocket. 5-phospho-alpha-D-ribose 1-diphosphate-binding positions include 72–73 (YK), Arg98, Lys99, Lys102, His104, and 123–131 (DDVITAGTA). Orotate-binding residues include Thr127 and Arg155.

This sequence belongs to the purine/pyrimidine phosphoribosyltransferase family. PyrE subfamily. As to quaternary structure, homodimer. Mg(2+) serves as cofactor.

It catalyses the reaction orotidine 5'-phosphate + diphosphate = orotate + 5-phospho-alpha-D-ribose 1-diphosphate. It participates in pyrimidine metabolism; UMP biosynthesis via de novo pathway; UMP from orotate: step 1/2. Catalyzes the transfer of a ribosyl phosphate group from 5-phosphoribose 1-diphosphate to orotate, leading to the formation of orotidine monophosphate (OMP). The polypeptide is Orotate phosphoribosyltransferase (Legionella pneumophila (strain Paris)).